A 310-amino-acid chain; its full sequence is AA9 family lytic polysaccharide monooxygenase A (310 aa).

An N-terminal signal peptide occupies residues 1 to 21; it reads MPSTKVAALSAVLALASTVAG. 2 residues coordinate Cu(2+): His-22 and His-107. 2 disulfide bridges follow: Cys-77–Cys-199 and Cys-118–Cys-122. N-linked (GlcNAc...) asparagine glycosylation is found at Asn-121 and Asn-159. His-185 provides a ligand contact to O2. Residue Tyr-196 participates in Cu(2+) binding.

The protein belongs to the polysaccharide monooxygenase AA9 family. Cu(2+) serves as cofactor.

It is found in the secreted. It catalyses the reaction [(1-&gt;4)-beta-D-glucosyl]n+m + reduced acceptor + O2 = 4-dehydro-beta-D-glucosyl-[(1-&gt;4)-beta-D-glucosyl]n-1 + [(1-&gt;4)-beta-D-glucosyl]m + acceptor + H2O.. Functionally, lytic polysaccharide monooxygenase (LPMO) that depolymerizes crystalline and amorphous polysaccharides via the oxidation of scissile alpha- or beta-(1-4)-glycosidic bonds, yielding C1, C4 as well as C6 oxidation products. Catalysis by LPMOs requires the reduction of the active-site copper from Cu(II) to Cu(I) by a reducing agent and H(2)O(2) or O(2) as a cosubstrate. Active on cellulose, but not on xylan, starch, or chitin. The sequence is that of AA9 family lytic polysaccharide monooxygenase A from Talaromyces pinophilus (Penicillium pinophilum).